A 149-amino-acid polypeptide reads, in one-letter code: Transcriptional regulator MraZ (149 aa).

SpoVT-AbrB domains are found at residues 7–54 (KYVN…GISH) and 83–126 (AVQL…QPQN).

This sequence belongs to the MraZ family. As to quaternary structure, forms oligomers.

The protein resides in the cytoplasm. The protein localises to the nucleoid. The polypeptide is Transcriptional regulator MraZ (Rickettsia akari (strain Hartford)).